The chain runs to 395 residues: Putative transport protein sll0063 (395 aa).

8 helical membrane passes run 24–44 (LNAITRLLVLVLGAPLMVLNA), 50–70 (IFGYFESLFVISLIASVIAFL), 91–111 (FVFLTALIIFTALGVTLIPLA), 180–200 (VFTVVRLLDVLLTIILTFYLL), 245–265 (ALGLISGFLLLKVPFGLLFGL), 269–289 (VMALIPFGGSVGIVLVTFLVA), 295–315 (MALQLLAVALVIQQIVENGIA), and 328–348 (FWVLISLLTGARIGGLLGVIV).

The protein belongs to the autoinducer-2 exporter (AI-2E) (TC 2.A.86) family.

It is found in the cell membrane. This is Putative transport protein sll0063 from Synechocystis sp. (strain ATCC 27184 / PCC 6803 / Kazusa).